A 387-amino-acid chain; its full sequence is Cysteine desulfurase IscS (387 aa).

Pyridoxal 5'-phosphate-binding positions include alanine 73–threonine 74, asparagine 155, glutamine 183, and serine 203–histidine 205. The residue at position 206 (lysine 206) is an N6-(pyridoxal phosphate)lysine. Threonine 241 provides a ligand contact to pyridoxal 5'-phosphate. Cysteine 328 (cysteine persulfide intermediate) is an active-site residue. Cysteine 328 serves as a coordination point for [2Fe-2S] cluster.

The protein belongs to the class-V pyridoxal-phosphate-dependent aminotransferase family. NifS/IscS subfamily. In terms of assembly, homodimer. Forms a heterotetramer with IscU, interacts with other sulfur acceptors. The cofactor is pyridoxal 5'-phosphate.

It is found in the cytoplasm. The catalysed reaction is (sulfur carrier)-H + L-cysteine = (sulfur carrier)-SH + L-alanine. The protein operates within cofactor biosynthesis; iron-sulfur cluster biosynthesis. Functionally, master enzyme that delivers sulfur to a number of partners involved in Fe-S cluster assembly, tRNA modification or cofactor biosynthesis. Catalyzes the removal of elemental sulfur atoms from cysteine to produce alanine. Functions as a sulfur delivery protein for Fe-S cluster synthesis onto IscU, an Fe-S scaffold assembly protein, as well as other S acceptor proteins. The polypeptide is Cysteine desulfurase IscS (Helicobacter pylori (strain P12)).